The chain runs to 435 residues: S-phase entry cyclin-5 (435 aa).

Disordered stretches follow at residues 36-70 (KRAL…NPLS) and 104-126 (NDRT…DAAS). Residues 41–52 (KNDSSSKQQVQD) show a composition bias toward low complexity. Residues 110 to 124 (EQEEEEEEEGEDDDA) are compositionally biased toward acidic residues.

Belongs to the cyclin family. Cyclin AB subfamily.

Functionally, required for efficient progression through S phase and possibly for the normal progression through meiosis. Interacts with CDC28. The chain is S-phase entry cyclin-5 (CLB5) from Saccharomyces cerevisiae (strain ATCC 204508 / S288c) (Baker's yeast).